The following is a 184-amino-acid chain: Large ribosomal subunit protein bL9 (184 aa).

The segment at 156 to 184 is disordered; sequence RQAKLQNQKSEQQEAEQDASKEAADADDS. Positions 173-184 are enriched in basic and acidic residues; the sequence is DASKEAADADDS.

Belongs to the bacterial ribosomal protein bL9 family.

Its function is as follows. Binds to the 23S rRNA. The chain is Large ribosomal subunit protein bL9 from Wolbachia pipientis subsp. Culex pipiens (strain wPip).